The following is a 404-amino-acid chain: Argininosuccinate synthase (404 aa).

ATP is bound by residues 10–18 and Ala37; that span reads AYSGGLDTS. The L-citrulline site is built by Tyr88 and Ser93. Residue Gly118 participates in ATP binding. Positions 120, 124, and 125 each coordinate L-aspartate. Asn124 is an L-citrulline binding site. L-citrulline-binding residues include Arg128, Ser178, Ser187, Glu263, and Tyr275.

It belongs to the argininosuccinate synthase family. Type 1 subfamily. In terms of assembly, homotetramer.

It localises to the cytoplasm. The catalysed reaction is L-citrulline + L-aspartate + ATP = 2-(N(omega)-L-arginino)succinate + AMP + diphosphate + H(+). The protein operates within amino-acid biosynthesis; L-arginine biosynthesis; L-arginine from L-ornithine and carbamoyl phosphate: step 2/3. This is Argininosuccinate synthase from Hahella chejuensis (strain KCTC 2396).